The chain runs to 551 residues: Scaffold protein OPG125 (551 aa).

This sequence belongs to the orthopoxvirus protein OPG125 family. In terms of assembly, homotrimer. Self-assembles to form a layer. Interacts with OPG158 (via N-terminus); this interaction is necessary for OPG125 association with membranes.

The protein localises to the membrane. Scaffold protein which forms a transitory spherical honeycomb lattice providing curvature and rigidity to the convex membrane of crescent and immature virions (IV). This association occurs concomitantly with viral membrane formation. Targeted by the drug rifampicin, which prevents the formation of this lattice, and hence virus morphogenesis. In the presence of rifampicin, irregularly shaped membranes that lack the honeycomb layer accumulate around areas of electron-dense viroplasm. This layer is lost from virions during maturation from IV to mature virion (MV), through the proteolysis of OPG158 N-terminus. This is Scaffold protein OPG125 (OPG125) from Homo sapiens (Human).